The sequence spans 256 residues: Geranylgeranylglyceryl phosphate synthase (256 aa).

Mg(2+) is bound by residues Asp28 and Ser53. Residues Tyr172–Gly178, Gly203–Gly204, and Gly225–Thr226 contribute to the sn-glycerol 1-phosphate site.

It belongs to the GGGP/HepGP synthase family. Group II subfamily. It depends on Mg(2+) as a cofactor.

It localises to the cytoplasm. It carries out the reaction sn-glycerol 1-phosphate + (2E,6E,10E)-geranylgeranyl diphosphate = sn-3-O-(geranylgeranyl)glycerol 1-phosphate + diphosphate. The protein operates within membrane lipid metabolism; glycerophospholipid metabolism. Functionally, prenyltransferase that catalyzes the transfer of the geranylgeranyl moiety of geranylgeranyl diphosphate (GGPP) to the C3 hydroxyl of sn-glycerol-1-phosphate (G1P). This reaction is the first ether-bond-formation step in the biosynthesis of archaeal membrane lipids. The sequence is that of Geranylgeranylglyceryl phosphate synthase from Methanococcus maripaludis (strain C5 / ATCC BAA-1333).